The following is an 873-amino-acid chain: DNA helicase/primase complex-associated protein (873 aa).

A disordered region spans residues 394–422; sequence PPLPRDDGDGENNVVEVSSSTGGAHPPSD.

Belongs to the herpesviridae HEPA family. In terms of assembly, associates with the primase and the helicase to form the helicase-primase complex. Interacts with the origin-binding protein. Interacts with the polymerase catalytic subunit.

The protein localises to the host nucleus. In terms of biological role, component of the helicase/primase complex. Unwinds the DNA at the replication forks and generates single-stranded DNA for both leading and lagging strand synthesis. The primase synthesizes short RNA primers on the lagging strand that the polymerase presumably elongates using dNTPs. The primase-associated factor has no known catalytic activity in the complex and may serve to facilitate the formation of the replisome by directly interacting with the origin-binding protein and the polymerase. This Homo sapiens (Human) protein is DNA helicase/primase complex-associated protein (UL102).